Reading from the N-terminus, the 103-residue chain is Large ribosomal subunit protein uL24 (103 aa).

The protein belongs to the universal ribosomal protein uL24 family. In terms of assembly, part of the 50S ribosomal subunit.

One of two assembly initiator proteins, it binds directly to the 5'-end of the 23S rRNA, where it nucleates assembly of the 50S subunit. Its function is as follows. One of the proteins that surrounds the polypeptide exit tunnel on the outside of the subunit. This is Large ribosomal subunit protein uL24 from Bacillus cytotoxicus (strain DSM 22905 / CIP 110041 / 391-98 / NVH 391-98).